Consider the following 258-residue polypeptide: Elongation factor Ts (258 aa).

The tract at residues 81-84 (TDFV) is involved in Mg(2+) ion dislocation from EF-Tu. A disordered region spans residues 216–258 (GLKPAEAPKVEETPPAPPEEPAPEPAPAAESKPAKKGSAKKKK). Positions 229–241 (PPAPPEEPAPEPA) are enriched in pro residues. Residues 249–258 (AKKGSAKKKK) show a composition bias toward basic residues.

It belongs to the EF-Ts family.

The protein localises to the cytoplasm. Functionally, associates with the EF-Tu.GDP complex and induces the exchange of GDP to GTP. It remains bound to the aminoacyl-tRNA.EF-Tu.GTP complex up to the GTP hydrolysis stage on the ribosome. In Synechococcus sp. (strain JA-2-3B'a(2-13)) (Cyanobacteria bacterium Yellowstone B-Prime), this protein is Elongation factor Ts.